A 425-amino-acid polypeptide reads, in one-letter code: Glucose-1-phosphate adenylyltransferase (425 aa).

Alpha-D-glucose 1-phosphate is bound by residues Tyr114, Gly179, 194-195, and Ser212; that span reads EK.

Belongs to the bacterial/plant glucose-1-phosphate adenylyltransferase family. In terms of assembly, homotetramer.

The enzyme catalyses alpha-D-glucose 1-phosphate + ATP + H(+) = ADP-alpha-D-glucose + diphosphate. It functions in the pathway glycan biosynthesis; glycogen biosynthesis. Its function is as follows. Involved in the biosynthesis of ADP-glucose, a building block required for the elongation reactions to produce glycogen. Catalyzes the reaction between ATP and alpha-D-glucose 1-phosphate (G1P) to produce pyrophosphate and ADP-Glc. The chain is Glucose-1-phosphate adenylyltransferase from Pectobacterium carotovorum subsp. carotovorum (strain PC1).